A 219-amino-acid polypeptide reads, in one-letter code: Probable nicotinate-nucleotide adenylyltransferase (219 aa).

This sequence belongs to the NadD family.

The enzyme catalyses nicotinate beta-D-ribonucleotide + ATP + H(+) = deamido-NAD(+) + diphosphate. It participates in cofactor biosynthesis; NAD(+) biosynthesis; deamido-NAD(+) from nicotinate D-ribonucleotide: step 1/1. Its function is as follows. Catalyzes the reversible adenylation of nicotinate mononucleotide (NaMN) to nicotinic acid adenine dinucleotide (NaAD). This Pseudomonas putida (strain W619) protein is Probable nicotinate-nucleotide adenylyltransferase.